The sequence spans 198 residues: tRNA (pseudouridine(54)-N(1))-methyltransferase (198 aa).

S-adenosyl-L-methionine-binding positions include L130, G153, 176 to 181, and C186; that span reads LSPLEL.

This sequence belongs to the methyltransferase superfamily. TrmY family. Homodimer.

It localises to the cytoplasm. The enzyme catalyses pseudouridine(54) in tRNA + S-adenosyl-L-methionine = N(1)-methylpseudouridine(54) in tRNA + S-adenosyl-L-homocysteine + H(+). Specifically catalyzes the N1-methylation of pseudouridine at position 54 (Psi54) in tRNAs. The sequence is that of tRNA (pseudouridine(54)-N(1))-methyltransferase from Methanococcus vannielii (strain ATCC 35089 / DSM 1224 / JCM 13029 / OCM 148 / SB).